The sequence spans 614 residues: Glucosidase 2 subunit beta (614 aa).

Positions 1–19 (MGLHAILLLLLLRISASAA) are cleaved as a signal peptide. Asn115 carries an N-linked (GlcNAc...) asparagine glycan. Composition is skewed to basic and acidic residues over residues 194–222 (EEER…KKAS), 231–272 (QENH…HDPE), and 324–351 (TGEK…HSEE). The segment at 194-396 (EEERLRKEKE…SHESDDEYVD (203 aa)) is disordered. Over residues 352 to 364 (THEDESDVPESAE) the composition is skewed to acidic residues. Basic and acidic residues predominate over residues 372–382 (SEVEDDRHKYD). A compositionally biased stretch (acidic residues) spans 383–396 (DEDFSHESDDEYVD). One can recognise an MRH domain in the interval 497–592 (DQCFESKEGK…VLSTPALCDE (96 aa)). 3 cysteine pairs are disulfide-bonded: Cys499–Cys512, Cys549–Cys578, and Cys563–Cys590.

In terms of assembly, heterodimer of a catalytic alpha subunit and a beta subunit.

It is found in the endoplasmic reticulum. It participates in glycan metabolism; N-glycan metabolism. Regulatory subunit of glucosidase II. May be required for defense response elicited by pathogen-associated molecular patterns (PAMPs). In Oryza sativa subsp. japonica (Rice), this protein is Glucosidase 2 subunit beta.